A 632-amino-acid chain; its full sequence is tRNA-guanine(15) transglycosylase (632 aa).

The Nucleophile role is filled by aspartate 86. Substrate contacts are provided by aspartate 121 and glycine 186. The PUA domain maps to 553-628 (NLRVFVKNES…IAVKIHEGRD (76 aa)).

This sequence belongs to the archaeosine tRNA-ribosyltransferase family. It depends on Zn(2+) as a cofactor.

The catalysed reaction is guanosine(15) in tRNA + 7-cyano-7-deazaguanine = 7-cyano-7-carbaguanosine(15) in tRNA + guanine. It functions in the pathway tRNA modification; archaeosine-tRNA biosynthesis. Its function is as follows. Exchanges the guanine residue with 7-cyano-7-deazaguanine (preQ0) at position 15 in the dihydrouridine loop (D-loop) of archaeal tRNAs. In Thermoplasma volcanium (strain ATCC 51530 / DSM 4299 / JCM 9571 / NBRC 15438 / GSS1), this protein is tRNA-guanine(15) transglycosylase.